The sequence spans 313 residues: MPAYRPPHIASSEITPKSFYLSRRNFLGTAAGLAAIGLAGREAIAAPLSAKPGAYKLDEKLTPLDAVTSYNNFYEFGVGKSDPKENSGKFKPTPWTVKVDGLVSKPQEFGIEELMKYPLEERTYRMRCVEGWSMVIPWIGFPLSALLDKVEPLGSAKYVSFETVVRPEEMPGQSGLFQPLSWPYVEGLRLDEARHPLTILAVGLYGETLPNQNGAPIRLVVPWKYGFKGIKSIMRISLVEKQPETTWKNSNAREYGFYSNVNPHVDHPRWSQATEQRIGEGGFFGTQNRPTLMFNGYDDVASLYTGLDLKANY.

The segment at residues methionine 1 to alanine 45 is a signal peptide (tat-type signal). Mo-molybdopterin-binding positions include asparagine 71, tyrosine 74 to glutamate 75, cysteine 128, threonine 163, asparagine 213, arginine 218, and glycine 229 to lysine 231.

It belongs to the MsrP family. In terms of assembly, heterodimer of a catalytic subunit (MsrP) and a heme-binding subunit (MsrQ). Requires Mo-molybdopterin as cofactor. Post-translationally, predicted to be exported by the Tat system. The position of the signal peptide cleavage has not been experimentally proven.

It is found in the periplasm. The catalysed reaction is L-methionyl-[protein] + a quinone + H2O = L-methionyl-(S)-S-oxide-[protein] + a quinol. The enzyme catalyses L-methionyl-[protein] + a quinone + H2O = L-methionyl-(R)-S-oxide-[protein] + a quinol. In terms of biological role, part of the MsrPQ system that repairs oxidized periplasmic proteins containing methionine sulfoxide residues (Met-O), using respiratory chain electrons. Thus protects these proteins from oxidative-stress damage caused by reactive species of oxygen and chlorine generated by the host defense mechanisms. MsrPQ is essential for the maintenance of envelope integrity under bleach stress, rescuing a wide series of structurally unrelated periplasmic proteins from methionine oxidation. The catalytic subunit MsrP is non-stereospecific, being able to reduce both (R-) and (S-) diastereoisomers of methionine sulfoxide. This Agrobacterium fabrum (strain C58 / ATCC 33970) (Agrobacterium tumefaciens (strain C58)) protein is Protein-methionine-sulfoxide reductase catalytic subunit MsrP.